The primary structure comprises 216 residues: Small ribosomal subunit protein uS3 (216 aa).

The 73-residue stretch at 39–111 folds into the KH type-2 domain; sequence IYKFFDKLVR…DINLQVSLLK (73 aa).

The protein belongs to the universal ribosomal protein uS3 family. In terms of assembly, part of the 30S ribosomal subunit. Forms a tight complex with proteins S10 and S14.

Binds the lower part of the 30S subunit head. Binds mRNA in the 70S ribosome, positioning it for translation. This is Small ribosomal subunit protein uS3 from Mycoplasmopsis agalactiae (strain NCTC 10123 / CIP 59.7 / PG2) (Mycoplasma agalactiae).